Here is a 155-residue protein sequence, read N- to C-terminus: Large ribosomal subunit protein eL24 (155 aa).

Residues 92 to 155 are disordered; the sequence is AKRNMKPEVR…KSAPRVGGKR (64 aa). Positions 96–117 are enriched in basic and acidic residues; the sequence is MKPEVRKAQRDQAIKAAKEQKK. Over residues 124–133 the composition is skewed to low complexity; it reads KASAPAPKAK.

It belongs to the eukaryotic ribosomal protein eL24 family.

This Spodoptera frugiperda (Fall armyworm) protein is Large ribosomal subunit protein eL24 (RpL24).